The sequence spans 259 residues: Aminoglycoside 3'-phosphotransferase (259 aa).

The Proton acceptor role is filled by Asp187.

Belongs to the aminoglycoside phosphotransferase family.

The catalysed reaction is kanamycin A + ATP = kanamycin 3'-phosphate + ADP + H(+). Resistance to kanamycin and structurally-related aminoglycosides, including amikacin. In Acinetobacter baumannii, this protein is Aminoglycoside 3'-phosphotransferase (aphA-6).